The chain runs to 501 residues: 25-hydroxyvitamin D-1 alpha hydroxylase, mitochondrial (501 aa).

Residue cysteine 448 coordinates heme.

This sequence belongs to the cytochrome P450 family. Heme serves as cofactor. Kidney.

It localises to the mitochondrion membrane. The catalysed reaction is calcidiol + 2 reduced [adrenodoxin] + O2 + 2 H(+) = calcitriol + 2 oxidized [adrenodoxin] + H2O. It catalyses the reaction secalciferol + 2 reduced [adrenodoxin] + O2 + 2 H(+) = calcitetrol + 2 oxidized [adrenodoxin] + H2O. Its pathway is hormone biosynthesis; cholecalciferol biosynthesis. Functionally, catalyzes the conversion of 25-hydroxyvitamin D3 (25(OH)D3) to 1-alpha,25-dihydroxyvitamin D3 (1alpha,25(OH)(2)D3), and of 24,25-dihydroxyvitamin D3 (24,25(OH)(2)D3) to 1-alpha,24,25-trihydroxyvitamin D3 (1alpha,24,25(OH)(3)D3). Is also active with 25-hydroxy-24-oxo-vitamin D3. Plays an important role in normal bone growth, calcium metabolism, and tissue differentiation. The chain is 25-hydroxyvitamin D-1 alpha hydroxylase, mitochondrial (Cyp27b1) from Rattus norvegicus (Rat).